Reading from the N-terminus, the 381-residue chain is Neuropeptide Y receptor type 2 (381 aa).

The segment at Met-1–Asp-35 is disordered. Residues Met-1–Val-51 lie on the Extracellular side of the membrane. Residue Asn-11 is glycosylated (N-linked (GlcNAc...) asparagine). A helical transmembrane segment spans residues Val-52–Ile-72. Topologically, residues His-73–Asn-86 are cytoplasmic. A helical membrane pass occupies residues Phe-87–Thr-107. Over Leu-108 to His-124 the chain is Extracellular. A disulfide bridge connects residues Cys-123 and Cys-203. The helical transmembrane segment at Leu-125–Ala-145 threads the bilayer. Residues Leu-146–Ser-165 lie on the Cytoplasmic side of the membrane. Residues Phe-166–Phe-186 form a helical membrane-spanning segment. Over Arg-187 to Gly-216 the chain is Extracellular. A helical membrane pass occupies residues Thr-217–Phe-237. At Ser-238 to Lys-268 the chain is on the cytoplasmic side. Residues Met-269–Leu-289 traverse the membrane as a helical segment. Topologically, residues Ala-290–Lys-304 are extracellular. The chain crosses the membrane as a helical span at residues Leu-305–Tyr-325. Residues Gly-326–Val-381 lie on the Cytoplasmic side of the membrane. Cys-342 is lipidated: S-palmitoyl cysteine.

The protein belongs to the G-protein coupled receptor 1 family. In terms of tissue distribution, high levels in amygdala, corpus callosum, hippocampus and subthalamic nucleus. Also detectable in caudate nucleus, hypothalamus and substantia nigra.

Its subcellular location is the cell membrane. Functionally, receptor for neuropeptide Y and peptide YY. The rank order of affinity of this receptor for pancreatic polypeptides is PYY &gt; NPY &gt; PYY (3-36) &gt; NPY (2-36) &gt; [Ile-31, Gln-34] PP &gt; [Leu-31, Pro-34] NPY &gt; PP, [Pro-34] PYY and NPY free acid. The polypeptide is Neuropeptide Y receptor type 2 (NPY2R) (Homo sapiens (Human)).